We begin with the raw amino-acid sequence, 513 residues long: ATP synthase subunit alpha (513 aa).

169 to 176 (GDRQTGKT) provides a ligand contact to ATP.

The protein belongs to the ATPase alpha/beta chains family. In terms of assembly, F-type ATPases have 2 components, CF(1) - the catalytic core - and CF(0) - the membrane proton channel. CF(1) has five subunits: alpha(3), beta(3), gamma(1), delta(1), epsilon(1). CF(0) has three main subunits: a(1), b(2) and c(9-12). The alpha and beta chains form an alternating ring which encloses part of the gamma chain. CF(1) is attached to CF(0) by a central stalk formed by the gamma and epsilon chains, while a peripheral stalk is formed by the delta and b chains.

The protein localises to the cell inner membrane. It carries out the reaction ATP + H2O + 4 H(+)(in) = ADP + phosphate + 5 H(+)(out). Produces ATP from ADP in the presence of a proton gradient across the membrane. The alpha chain is a regulatory subunit. The sequence is that of ATP synthase subunit alpha from Escherichia coli O81 (strain ED1a).